A 97-amino-acid polypeptide reads, in one-letter code: Co-chaperonin GroES (97 aa).

It belongs to the GroES chaperonin family. As to quaternary structure, heptamer of 7 subunits arranged in a ring. Interacts with the chaperonin GroEL.

The protein localises to the cytoplasm. Its function is as follows. Together with the chaperonin GroEL, plays an essential role in assisting protein folding. The GroEL-GroES system forms a nano-cage that allows encapsulation of the non-native substrate proteins and provides a physical environment optimized to promote and accelerate protein folding. GroES binds to the apical surface of the GroEL ring, thereby capping the opening of the GroEL channel. The protein is Co-chaperonin GroES of Escherichia fergusonii (strain ATCC 35469 / DSM 13698 / CCUG 18766 / IAM 14443 / JCM 21226 / LMG 7866 / NBRC 102419 / NCTC 12128 / CDC 0568-73).